Consider the following 58-residue polypeptide: Ribosome biogenesis protein Nop10 (58 aa).

Belongs to the NOP10 family.

Functionally, involved in ribosome biogenesis; more specifically in 18S rRNA pseudouridylation and in cleavage of pre-rRNA. This chain is Ribosome biogenesis protein Nop10, found in Methanobrevibacter smithii (strain ATCC 35061 / DSM 861 / OCM 144 / PS).